The following is a 598-amino-acid chain: DNA mismatch repair protein MutL (598 aa).

Belongs to the DNA mismatch repair MutL/HexB family.

Its function is as follows. This protein is involved in the repair of mismatches in DNA. It is required for dam-dependent methyl-directed DNA mismatch repair. May act as a 'molecular matchmaker', a protein that promotes the formation of a stable complex between two or more DNA-binding proteins in an ATP-dependent manner without itself being part of a final effector complex. The protein is DNA mismatch repair protein MutL of Geotalea daltonii (strain DSM 22248 / JCM 15807 / FRC-32) (Geobacter daltonii).